The chain runs to 308 residues: D-alanine--D-alanine ligase (308 aa).

One can recognise an ATP-grasp domain in the interval 105–302 (KAIFRSLGLA…FPDLCERILD (198 aa)). ATP is bound at residue 133-188 (DLPFGLPCVVKPAGEGSSVGVHLVNEAAELGPACRDAASHAGDVIVERYVKGTEVD). Asp256, Glu269, and Asn271 together coordinate Mg(2+).

The protein belongs to the D-alanine--D-alanine ligase family. Mg(2+) serves as cofactor. Requires Mn(2+) as cofactor.

The protein resides in the cytoplasm. It catalyses the reaction 2 D-alanine + ATP = D-alanyl-D-alanine + ADP + phosphate + H(+). The protein operates within cell wall biogenesis; peptidoglycan biosynthesis. In terms of biological role, cell wall formation. The sequence is that of D-alanine--D-alanine ligase from Anaeromyxobacter dehalogenans (strain 2CP-1 / ATCC BAA-258).